A 179-amino-acid chain; its full sequence is Crossover junction endodeoxyribonuclease RuvC (179 aa).

Catalysis depends on residues D7 and E67. Mn(2+) contacts are provided by D7 and E67. The DNA-binding loop motif lies at 68–74 (DQILRRQ). Active-site residues include H139 and D142. Position 139 (H139) interacts with Mn(2+).

This sequence belongs to the RuvC family. As to quaternary structure, homodimer which binds Holliday junction (HJ) DNA. The HJ becomes 2-fold symmetrical on binding to RuvC with unstacked arms; it has a different conformation from HJ DNA in complex with RuvA. In the full resolvosome a probable DNA-RuvA(4)-RuvB(12)-RuvC(2) complex forms which resolves the HJ. The cofactor is Mn(2+).

It is found in the cytoplasm. The catalysed reaction is Endonucleolytic cleavage at a junction such as a reciprocal single-stranded crossover between two homologous DNA duplexes (Holliday junction).. Functionally, the RuvA-RuvB-RuvC complex processes Holliday junction (HJ) DNA during genetic recombination and DNA repair. Endonuclease that resolves HJ intermediates. Cleaves cruciform DNA by making single-stranded nicks across the HJ at symmetrical positions within the homologous arms, probably yielding a 5'-phosphate and a 3'-hydroxyl group; requires a central core of homology in the junction. The consensus cleavage sequence is 5'-(G/C)TC(C/G)-3' (a different site than E.coli); cleavage occurs on the 3'-side of the TC dinucleotide at the point of strand exchange. Also resolves nicked HJ intermediates, replication forks and Y-junction DNA in vitro. HJ branch migration catalyzed by RuvA-RuvB allows RuvC to scan DNA until it finds its consensus sequence, where it cleaves and resolves the cruciform DNA. In terms of biological role, binds HJ DNA independently of homologous core or consensus sequence; Mn(2+) is not essential for binding but improves it, while &gt;1.0 mM Mg(2+) inhibit binding. Also binds Y-junction DNA less well. Requires a homologous core to cleave DNA. Another study shows divalent cations (Mn(2+), Mg(2+) and Ca(2+), tested up to 5.0 mM) improve DNA binding considerably over binding in their absence. The polypeptide is Crossover junction endodeoxyribonuclease RuvC (Deinococcus radiodurans (strain ATCC 13939 / DSM 20539 / JCM 16871 / CCUG 27074 / LMG 4051 / NBRC 15346 / NCIMB 9279 / VKM B-1422 / R1)).